The chain runs to 342 residues: MMNMLSDRKKLILKAVVENYSQKGQPVGSKLLTHLPYLKFASATIRYDMVQLEKEGFLQKNHTSSGRVPSFKGYTYYLNHLLTRDHDVACMFESIDKVIQKKRFCKGQVIKEALSLLNNLTNYTAMAIGSDIFNNSKINKIDFIPLNSTQAVILIITDKGNVQHQNISLDQTKEISIYDLKDVVQVVNDLLTDKFLSEAANIIQSDFFKQTIAKYICFQEQLIALFMEVFSSFASENLYFSGVSKMLEKPELSNPEIIKKFMGLLERKELLKIMLNQDSLSFKFSDGLQLTPLKDCMILSIPFDVNPNEKGRIAVVGPSWMKYPKVIPILEYLAVHLSKLND.

This sequence belongs to the HrcA family.

In terms of biological role, negative regulator of class I heat shock genes (grpE-dnaK-dnaJ and groELS operons). Prevents heat-shock induction of these operons. This is Heat-inducible transcription repressor HrcA from Onion yellows phytoplasma (strain OY-M).